The chain runs to 509 residues: ATP synthase subunit alpha (509 aa).

Residue 169–176 (GDRQTGKT) participates in ATP binding.

Belongs to the ATPase alpha/beta chains family. In terms of assembly, F-type ATPases have 2 components, CF(1) - the catalytic core - and CF(0) - the membrane proton channel. CF(1) has five subunits: alpha(3), beta(3), gamma(1), delta(1), epsilon(1). CF(0) has four main subunits: a(1), b(1), b'(1) and c(9-12).

It localises to the cell inner membrane. The enzyme catalyses ATP + H2O + 4 H(+)(in) = ADP + phosphate + 5 H(+)(out). Its function is as follows. Produces ATP from ADP in the presence of a proton gradient across the membrane. The alpha chain is a regulatory subunit. This Erythrobacter litoralis (strain HTCC2594) protein is ATP synthase subunit alpha.